The sequence spans 704 residues: Elongation factor G (704 aa).

Residues 8 to 290 (ARYRNIGISA…AVVDYLPSPV (283 aa)) enclose the tr-type G domain. Residues 17–24 (AHIDAGKT), 88–92 (DTPGH), and 142–145 (NKMD) each bind GTP.

This sequence belongs to the TRAFAC class translation factor GTPase superfamily. Classic translation factor GTPase family. EF-G/EF-2 subfamily.

It localises to the cytoplasm. In terms of biological role, catalyzes the GTP-dependent ribosomal translocation step during translation elongation. During this step, the ribosome changes from the pre-translocational (PRE) to the post-translocational (POST) state as the newly formed A-site-bound peptidyl-tRNA and P-site-bound deacylated tRNA move to the P and E sites, respectively. Catalyzes the coordinated movement of the two tRNA molecules, the mRNA and conformational changes in the ribosome. This chain is Elongation factor G, found in Pectobacterium carotovorum subsp. carotovorum (strain PC1).